The chain runs to 143 residues: Transcriptional regulator SlyA (143 aa).

The region spanning 2–135 (ESTLGSDLAR…LSGLIDKLEK (134 aa)) is the HTH marR-type domain. The segment at residues 49-72 (QIQLAKAIGIEQPSLVRTLDQLEE) is a DNA-binding region (H-T-H motif).

The protein belongs to the SlyA family. In terms of assembly, homodimer.

Its function is as follows. Transcription regulator that can specifically activate or repress expression of target genes. The protein is Transcriptional regulator SlyA of Yersinia pestis bv. Antiqua (strain Antiqua).